The sequence spans 306 residues: Agmatinase (306 aa).

Residues His-126, Asp-149, His-151, Asp-153, Asp-230, and Asp-232 each contribute to the Mn(2+) site.

This sequence belongs to the arginase family. Agmatinase subfamily. Requires Mn(2+) as cofactor.

It carries out the reaction agmatine + H2O = urea + putrescine. It functions in the pathway amine and polyamine biosynthesis; putrescine biosynthesis via agmatine pathway; putrescine from agmatine: step 1/1. In terms of biological role, catalyzes the formation of putrescine from agmatine. This chain is Agmatinase, found in Klebsiella pneumoniae (strain 342).